A 367-amino-acid polypeptide reads, in one-letter code: Protein trichome birefringence-like 39 (367 aa).

The helical; Signal-anchor for type II membrane protein transmembrane segment at 7–29 threads the bilayer; the sequence is GNPSFLFFFFFFLCLSTVSAYIN. Positions 120-122 match the GDS motif motif; sequence GDS. The short motif at 343–357 is the DCXHWCLPGXXDXWN motif element; the sequence is DCSHWCLPGLPDTWN.

The protein belongs to the PC-esterase family. TBL subfamily.

Its subcellular location is the membrane. Functionally, may act as a bridging protein that binds pectin and other cell wall polysaccharides. Probably involved in maintaining esterification of pectins. May be involved in the specific O-acetylation of cell wall polymers. In Arabidopsis thaliana (Mouse-ear cress), this protein is Protein trichome birefringence-like 39 (TBL39).